Consider the following 492-residue polypeptide: uncharacterized protein (492 aa).

Transmembrane regions (helical) follow at residues 13–33, 42–62, 97–117, 150–170, 180–200, 222–242, 258–278, 320–340, 359–379, 391–411, 428–448, and 463–483; these read LGFI…WRFG, GAFL…LMIL, FIIT…LIIL, GILV…SAGI, IMIP…LTLP, VWLS…GILI, AVTV…AVFG, FGIV…VSIV, LLAV…GAGL, GYLL…LFGG, VWWK…VVFL, and TTYV…SVIL.

It belongs to the sodium:neurotransmitter symporter (SNF) (TC 2.A.22) family.

It localises to the cell membrane. Functionally, putative sodium-dependent transporter. This is an uncharacterized protein from Methanocaldococcus jannaschii (strain ATCC 43067 / DSM 2661 / JAL-1 / JCM 10045 / NBRC 100440) (Methanococcus jannaschii).